Consider the following 231-residue polypeptide: MAAFPNLNSDAGLKKLDEHLLTRSYITGYQASKDDITVFAALAKPPTSQYVNASRWYNHIDALLRISGVSAEGSGVIVEGSAPITEEAVATPPAADSKDAAADEEDDDDVDLFGEETEEEKKAAEERAASVKASTKKKESGKSSVLIDIKPWDDETDMKKLEEAVKSIQMEGLFWGASKLVPVGYGIKKLQILCTIVDDLVSIDTMIEEQLTVEPINEYVQSCDIVAFNKI.

N-acetylalanine is present on Ala-2. The GST C-terminal domain maps to 10–73 (DAGLKKLDEH…LRISGVSAEG (64 aa)). 2 disordered regions span residues 85–108 (TEEA…EDDD) and 116–135 (ETEE…KAST). The span at 119–129 (EEKKAAEERAA) shows a compositional bias: basic and acidic residues.

It belongs to the EF-1-beta/EF-1-delta family. EF-1 is composed of 4 subunits: alpha, beta (1B-alpha=beta'), delta (1B-beta), and gamma (1B-gamma).

Functionally, EF-1-beta and EF-1-delta stimulate the exchange of GDP bound to EF-1-alpha to GTP. This chain is Elongation factor 1-delta 1, found in Arabidopsis thaliana (Mouse-ear cress).